Consider the following 252-residue polypeptide: Trypsin iota (252 aa).

Positions 1–19 (MAVYGIVATVLVLLLLGDA) are cleaved as a signal peptide. A propeptide spans 20 to 27 (SDVEATGR) (activation peptide). Residues 28–250 (IIGGSDQLIR…LRPWIVKAAN (223 aa)) form the Peptidase S1 domain. Cysteines 53 and 69 form a disulfide. Catalysis depends on charge relay system residues histidine 68 and aspartate 113. Intrachain disulfides connect cysteine 175-cysteine 193 and cysteine 202-cysteine 226. Serine 206 acts as the Charge relay system in catalysis.

This sequence belongs to the peptidase S1 family.

The protein localises to the secreted. The protein resides in the extracellular space. It carries out the reaction Preferential cleavage: Arg-|-Xaa, Lys-|-Xaa.. This is Trypsin iota (iotaTry) from Drosophila melanogaster (Fruit fly).